Reading from the N-terminus, the 991-residue chain is Translation initiation factor IF-2 (991 aa).

Disordered regions lie at residues 126–220 and 325–359; these read QADH…DVGE and VKAA…VDEK. 2 stretches are compositionally biased toward polar residues: residues 138-160 and 201-210; these read QTES…TEPA and PAAQTESAVQ. Over residues 326–340 the composition is skewed to low complexity; that stretch reads KAAGDGDTAPAADDA. Residues 343–353 show a composition bias toward basic residues; sequence GKKKPGKKKKK. Residues 488 to 658 form the tr-type G domain; it reads IRPPVVTIMG…LTEAEIRELK (171 aa). The segment at 497-504 is G1; it reads GHVDHGKT. 497–504 contributes to the GTP binding site; that stretch reads GHVDHGKT. The tract at residues 522–526 is G2; it reads GITQH. Residues 544–547 form a G3 region; it reads DTPG. GTP is bound by residues 544–548 and 598–601; these read DTPGH and NKID. The tract at residues 598–601 is G4; it reads NKID. Residues 634-636 are G5; that stretch reads SAK.

It belongs to the TRAFAC class translation factor GTPase superfamily. Classic translation factor GTPase family. IF-2 subfamily.

It is found in the cytoplasm. Its function is as follows. One of the essential components for the initiation of protein synthesis. Protects formylmethionyl-tRNA from spontaneous hydrolysis and promotes its binding to the 30S ribosomal subunits. Also involved in the hydrolysis of GTP during the formation of the 70S ribosomal complex. The polypeptide is Translation initiation factor IF-2 (Chlorobium phaeobacteroides (strain DSM 266 / SMG 266 / 2430)).